A 303-amino-acid polypeptide reads, in one-letter code: MKMIETSLASASAALRDRVDEILAAATREDGCAPLSESFLNGLRRADDGHVHSCVMDSHDQVVGVAARDGDSAEVVVDPAFRRQGYGSFLIRHVVSQGVKNVWAHGDGAGAKAVAKALQLEQTRQLLVMAVEGDRLVESAQLQVPSGFRVLALNEAYESIPDIEQQWLRVNNEAFEWHPEQGGWDSARLAQARDTQWFRESDVLFLIDTAKRTVAGFHWTKRHGDLAEGADGEVYVVGLGSAYRRRGLGDLLIRMGLHHLEYEHARRVILYVEGDNESARRAYDALGFHVVESHVTYSPQSSS.

2 N-acetyltransferase domains span residues 6–134 (TSLA…VEGD) and 154–303 (NEAY…QSSS). Glu-37 serves as a coordination point for 1D-myo-inositol 2-(L-cysteinylamino)-2-deoxy-alpha-D-glucopyranoside. Acetyl-CoA is bound by residues 75-77 (VVV) and 83-88 (RQGYGS). The 1D-myo-inositol 2-(L-cysteinylamino)-2-deoxy-alpha-D-glucopyranoside site is built by Glu-180, Lys-221, and Glu-233. Acetyl-CoA contacts are provided by residues 237-239 (VGL) and 244-250 (RRRGLGD). 1D-myo-inositol 2-(L-cysteinylamino)-2-deoxy-alpha-D-glucopyranoside is bound at residue Tyr-271. Residue 276–281 (NESARR) coordinates acetyl-CoA.

This sequence belongs to the acetyltransferase family. MshD subfamily. In terms of assembly, monomer.

The enzyme catalyses 1D-myo-inositol 2-(L-cysteinylamino)-2-deoxy-alpha-D-glucopyranoside + acetyl-CoA = mycothiol + CoA + H(+). Functionally, catalyzes the transfer of acetyl from acetyl-CoA to desacetylmycothiol (Cys-GlcN-Ins) to form mycothiol. The polypeptide is Mycothiol acetyltransferase (Corynebacterium diphtheriae (strain ATCC 700971 / NCTC 13129 / Biotype gravis)).